The following is a 415-amino-acid chain: Probable glucuronosyltransferase Os01g0926600 (415 aa).

Residues 1–4 (MAMR) lie on the Cytoplasmic side of the membrane. Residues 5–25 (LSSAAVALALLLAATALEDVA) form a helical; Signal-anchor for type II membrane protein membrane-spanning segment. Residues 26–415 (RGQDTERIEG…QGPVGDLKPW (390 aa)) lie on the Lumenal side of the membrane. N-linked (GlcNAc...) asparagine glycans are attached at residues Asn142 and Asn403.

Belongs to the glycosyltransferase 47 family.

It localises to the golgi apparatus membrane. Involved in the synthesis of glucuronoxylan hemicellulose in secondary cell walls. This chain is Probable glucuronosyltransferase Os01g0926600, found in Oryza sativa subsp. japonica (Rice).